The chain runs to 98 residues: Large ribosomal subunit protein uL23 (98 aa).

Belongs to the universal ribosomal protein uL23 family. As to quaternary structure, part of the 50S ribosomal subunit. Contacts protein L29, and trigger factor when it is bound to the ribosome.

Functionally, one of the early assembly proteins it binds 23S rRNA. One of the proteins that surrounds the polypeptide exit tunnel on the outside of the ribosome. Forms the main docking site for trigger factor binding to the ribosome. The sequence is that of Large ribosomal subunit protein uL23 from Streptococcus equi subsp. equi (strain 4047).